The primary structure comprises 568 residues: MSISVFNRCWSKVILETLVRQGVAHFCIAPGSRSTPLTLEAIRLQDSHRVTCHTHFDERGLGFFALGLAKVSKKPVAVIVTSGTAAANLYPAIIEARQTGVNLIVLTADRPPELIECGANQAIVQPHMYADYPVASVNLPRPSQDYSADWLISRLEQACYQQARQPGVVHVNVPFAEPLYEASETDIEAHSWLVPIQRWLNQHKPWIQQQTDQKEVLMHANWDHWRTMRGVIVVGRLPVEQTMGIMAWANTMGWIALTDVQSSVEASLPYADIWLANQTVKQKLLQADIVIQFGSGFISKRVNQFLAAFKQEYWIVEQSTGLIDPNHHAHTRFNAKVHHWLRAHPPLRQKPWLLEPLALSKFCASFIEKQVGGNLNEASLAHHLDRILSNNGVLFLGNSLFVRLVDALAKLPEGYPVYTNRGASGIDGLLATAAGIGIGANQPLVAMIGDVSALYDINSLALFKKVTQPTIIFVINNNGGAIFDMLPVEADVKEKYYRMPHHLEFSQLVQTFDLKYARPYTWADLGAVLKVAYSRRETTLIEIKVGASDASTIYKRLIEQISYAVIGE.

The protein belongs to the TPP enzyme family. MenD subfamily. As to quaternary structure, homodimer. Mg(2+) is required as a cofactor. The cofactor is Mn(2+). It depends on thiamine diphosphate as a cofactor.

It catalyses the reaction isochorismate + 2-oxoglutarate + H(+) = 5-enolpyruvoyl-6-hydroxy-2-succinyl-cyclohex-3-ene-1-carboxylate + CO2. It functions in the pathway quinol/quinone metabolism; 1,4-dihydroxy-2-naphthoate biosynthesis; 1,4-dihydroxy-2-naphthoate from chorismate: step 2/7. The protein operates within quinol/quinone metabolism; menaquinone biosynthesis. Catalyzes the thiamine diphosphate-dependent decarboxylation of 2-oxoglutarate and the subsequent addition of the resulting succinic semialdehyde-thiamine pyrophosphate anion to isochorismate to yield 2-succinyl-5-enolpyruvyl-6-hydroxy-3-cyclohexene-1-carboxylate (SEPHCHC). The chain is 2-succinyl-5-enolpyruvyl-6-hydroxy-3-cyclohexene-1-carboxylate synthase from Pasteurella multocida (strain Pm70).